We begin with the raw amino-acid sequence, 778 residues long: Endonuclease MutS2 (778 aa).

Position 329 to 336 (329 to 336 (GPNTGGKT)) interacts with ATP. The region spanning 703 to 778 (LDLRGKRYEE…GSGCTIVTFK (76 aa)) is the Smr domain.

It belongs to the DNA mismatch repair MutS family. MutS2 subfamily. Homodimer. Binds to stalled ribosomes, contacting rRNA.

In terms of biological role, endonuclease that is involved in the suppression of homologous recombination and thus may have a key role in the control of bacterial genetic diversity. Functionally, acts as a ribosome collision sensor, splitting the ribosome into its 2 subunits. Detects stalled/collided 70S ribosomes which it binds and splits by an ATP-hydrolysis driven conformational change. Acts upstream of the ribosome quality control system (RQC), a ribosome-associated complex that mediates the extraction of incompletely synthesized nascent chains from stalled ribosomes and their subsequent degradation. Probably generates substrates for RQC. The polypeptide is Endonuclease MutS2 (Streptococcus suis (strain 98HAH33)).